Reading from the N-terminus, the 81-residue chain is Photosystem I iron-sulfur center (81 aa).

2 4Fe-4S ferredoxin-type domains span residues 2-31 and 39-68; these read SHAV…MVPW and IASS…IRVY. The [4Fe-4S] cluster site is built by Cys11, Cys14, Cys17, Cys21, Cys48, Cys51, Cys54, and Cys58.

In terms of assembly, the cyanobacterial PSI reaction center is composed of one copy each of PsaA,B,C,D,E,F,I,J,K,L,M and X, and forms trimeric complexes. The cofactor is [4Fe-4S] cluster.

It localises to the cellular thylakoid membrane. It carries out the reaction reduced [plastocyanin] + hnu + oxidized [2Fe-2S]-[ferredoxin] = oxidized [plastocyanin] + reduced [2Fe-2S]-[ferredoxin]. Apoprotein for the two 4Fe-4S centers FA and FB of photosystem I (PSI); essential for photochemical activity. FB is the terminal electron acceptor of PSI, donating electrons to ferredoxin. The C-terminus interacts with PsaA/B/D and helps assemble the protein into the PSI complex. Required for binding of PsaD and PsaE to PSI. PSI is a plastocyanin/cytochrome c6-ferredoxin oxidoreductase, converting photonic excitation into a charge separation, which transfers an electron from the donor P700 chlorophyll pair to the spectroscopically characterized acceptors A0, A1, FX, FA and FB in turn. In Prochlorococcus marinus (strain MIT 9211), this protein is Photosystem I iron-sulfur center.